Consider the following 127-residue polypeptide: Profilin (127 aa).

Belongs to the profilin family. In terms of assembly, occurs in many kinds of cells as a complex with monomeric actin in a 1:1 ratio.

Its subcellular location is the cytoplasm. The protein resides in the cytoskeleton. Functionally, binds to actin and affects the structure of the cytoskeleton. At high concentrations, profilin prevents the polymerization of actin, whereas it enhances it at low concentrations. By binding to PIP2, it inhibits the formation of IP3 and DG. In S.pombe, it is essential for cytokinesis. The chain is Profilin (cdc3) from Schizosaccharomyces pombe (strain 972 / ATCC 24843) (Fission yeast).